We begin with the raw amino-acid sequence, 1277 residues long: Neural cell adhesion molecule L1 (1277 aa).

Residues 1 to 34 form the signal peptide; that stretch reads MAHTQRQQGGSRGQWSRCLLLLLLLPLAAQPGRA. Topologically, residues 35–1135 are extracellular; the sequence is AIQIPSSYYI…VQPSFATQGW (1101 aa). Ig-like C2-type domains lie at 51-140, 150-241, 256-344, 349-437, and 443-528; these read PAIT…TAVS, PPVQ…EPIT, PQMM…YTVT, PYWT…TNVY, and PQIL…AEVE. Cystine bridges form between Cys72–Cys129, Cys173–Cys224, Cys280–Cys328, Cys370–Cys421, and Cys465–Cys514. Asn317 carries an N-linked (GlcNAc...) asparagine glycan. Asn503, Asn520, and Asn531 each carry an N-linked (GlcNAc...) asparagine glycan. The region spanning 532–623 is the Ig-like C2-type 6 domain; the sequence is RTVILSPPQA…DMVEASSTLT (92 aa). Residues Cys554 and Cys607 are joined by a disulfide bond. 5 Fibronectin type-III domains span residues 630-725, 730-824, 829-931, 935-1030, and 1032-1129; these read PPVH…TPAD, NPED…SGED, APLN…TPEG, PPMS…TLEG, and PPAN…VQPS. The segment at 714–740 is disordered; sequence SKLSDLYKTPADAPDSNPEDVRSESTD. N-linked (GlcNAc...) asparagine glycosylation is found at Asn794 and Asn839. N-linked (GlcNAc...) asparagine glycosylation is found at Asn1035, Asn1046, Asn1068, Asn1083, and Asn1108. The chain crosses the membrane as a helical span at residues 1136–1156; the sequence is FIGVVSAVVLLLLVLLILCFI. Over 1157-1277 the chain is Cytoplasmic; that stretch reads KRSKGGKYSV…ATNGAPSFLN (121 aa). Disordered stretches follow at residues 1163–1216 and 1232–1277; these read KYSV…LCSE and NMDE…SFLN. Over residues 1165 to 1201 the composition is skewed to basic and acidic residues; it reads SVKDKEDGPMDSEARPMKDETFGEYRSLESDLEEKRT. Residues 1232–1242 are compositionally biased toward polar residues; that stretch reads NMDESLASQFS. Low complexity predominate over residues 1255-1277; sequence PDNSPLNPAANPPATNGAPSFLN.

The protein belongs to the immunoglobulin superfamily. L1/neurofascin/NgCAM family.

It localises to the cell membrane. Its subcellular location is the cell projection. The protein localises to the growth cone. In terms of biological role, neural cell adhesion molecule involved in the dynamics of cell adhesion and in the generation of transmembrane signals at tyrosine kinase receptors. During brain development, critical in multiple processes, including neuronal migration, axonal growth and fasciculation, and synaptogenesis. In the mature brain, plays a role in the dynamics of neuronal structure and function, including synaptic plasticity. The protein is Neural cell adhesion molecule L1 (l1cam) of Takifugu rubripes (Japanese pufferfish).